The sequence spans 220 residues: Endonuclease NucS (220 aa).

Belongs to the NucS endonuclease family.

It localises to the cytoplasm. In terms of biological role, cleaves both 3' and 5' ssDNA extremities of branched DNA structures. This is Endonuclease NucS from Mycobacterium leprae (strain TN).